Consider the following 141-residue polypeptide: NADPH-dependent 7-cyano-7-deazaguanine reductase (141 aa).

Cys56 (thioimide intermediate) is an active-site residue. Asp63 serves as the catalytic Proton donor. Substrate is bound by residues Val78–Leu80 and His97–Glu98.

Belongs to the GTP cyclohydrolase I family. QueF type 1 subfamily.

The protein localises to the cytoplasm. The catalysed reaction is 7-aminomethyl-7-carbaguanine + 2 NADP(+) = 7-cyano-7-deazaguanine + 2 NADPH + 3 H(+). It participates in tRNA modification; tRNA-queuosine biosynthesis. In terms of biological role, catalyzes the NADPH-dependent reduction of 7-cyano-7-deazaguanine (preQ0) to 7-aminomethyl-7-deazaguanine (preQ1). The protein is NADPH-dependent 7-cyano-7-deazaguanine reductase of Trichodesmium erythraeum (strain IMS101).